The following is a 178-amino-acid chain: Deoxycytidylate deaminase (178 aa).

One can recognise a CMP/dCMP-type deaminase domain in the interval 14-145 (EWPEYFMAVA…EETTAARLLF (132 aa)). Histidine 84 lines the Zn(2+) pocket. Glutamate 86 serves as the catalytic Proton donor. Zn(2+)-binding residues include cysteine 110 and cysteine 113. Serine 174 is modified (phosphoserine).

It belongs to the cytidine and deoxycytidylate deaminase family. As to quaternary structure, homohexamer. Zn(2+) is required as a cofactor.

It catalyses the reaction dCMP + H2O + H(+) = dUMP + NH4(+). It carries out the reaction 5-hydroxymethyl-dCMP + H2O + H(+) = 5-hydroxymethyl-dUMP + NH4(+). Its activity is regulated as follows. Allosteric enzyme whose activity is greatly influenced by the end products of its metabolic pathway, dCTP and dTTP. Functionally, catalyzes the deamination of dCMP to dUMP, providing the nucleoside monophosphate substrate for the thymidylate synthase/TYMS. Also, part of a nucleotide salvage pathway that eliminates epigenetically modified 5-hydroxymethyl-dCMP (hmdCMP) in a two-step process entailing deamination to cytotoxic 5-hydroxymethyl-dUMP (hmdUMP), followed by its hydrolysis into 5-hydroxymethyluracil (hmU) and 2-deoxy-D-ribose 5-phosphate (deoxyribosephosphate). Catalyzes the first step in that pathway, the deamination of 5-hydroxymethyl-dCMP (hmdCMP). This chain is Deoxycytidylate deaminase, found in Mus musculus (Mouse).